The primary structure comprises 206 residues: Small ribosomal subunit protein uS4 (206 aa).

Residues 96-156 enclose the S4 RNA-binding domain; that stretch reads GRLDNVVYRM…EKSKKQARIK (61 aa).

It belongs to the universal ribosomal protein uS4 family. Part of the 30S ribosomal subunit. Contacts protein S5. The interaction surface between S4 and S5 is involved in control of translational fidelity.

In terms of biological role, one of the primary rRNA binding proteins, it binds directly to 16S rRNA where it nucleates assembly of the body of the 30S subunit. Functionally, with S5 and S12 plays an important role in translational accuracy. This chain is Small ribosomal subunit protein uS4, found in Haemophilus influenzae (strain ATCC 51907 / DSM 11121 / KW20 / Rd).